The following is a 327-amino-acid chain: DNA primase large subunit PriL (327 aa).

The [4Fe-4S] cluster site is built by Cys-218, Cys-290, Cys-299, and Cys-307.

Belongs to the eukaryotic-type primase large subunit family. As to quaternary structure, heterodimer of a small subunit (PriS) and a large subunit (PriL). It depends on [4Fe-4S] cluster as a cofactor.

Regulatory subunit of DNA primase, an RNA polymerase that catalyzes the synthesis of short RNA molecules used as primers for DNA polymerase during DNA replication. Stabilizes and modulates the activity of the small subunit, increasing the rate of DNA synthesis, and conferring RNA synthesis capability. The DNA polymerase activity may enable DNA primase to also catalyze primer extension after primer synthesis. May also play a role in DNA repair. The protein is DNA primase large subunit PriL of Thermoplasma volcanium (strain ATCC 51530 / DSM 4299 / JCM 9571 / NBRC 15438 / GSS1).